A 240-amino-acid polypeptide reads, in one-letter code: Arginine transport ATP-binding protein ArtM (240 aa).

The region spanning 2–236 is the ABC transporter domain; the sequence is IKVEKLSKSF…PKSKRAQDFL (235 aa). 34–41 serves as a coordination point for ATP; the sequence is GPSGSGKS.

This sequence belongs to the ABC transporter superfamily.

It localises to the cell membrane. Part of a binding-protein-dependent transport system for arginine. Probably responsible for energy coupling to the transport system. This chain is Arginine transport ATP-binding protein ArtM (artM), found in Bacillus subtilis (strain 168).